Consider the following 497-residue polypeptide: Cytochrome P450 71A20 (497 aa).

Residues 3–23 traverse the membrane as a helical segment; it reads MILITLCLTTLLALLLKSILK. Cys-440 lines the heme pocket.

It belongs to the cytochrome P450 family. The cofactor is heme.

It is found in the membrane. The chain is Cytochrome P450 71A20 (CYP71A20) from Arabidopsis thaliana (Mouse-ear cress).